The following is a 514-amino-acid chain: L-carnitine/gamma-butyrobetaine antiporter (514 aa).

Topologically, residues 1–11 are cytoplasmic; sequence MSKDNKKAGIE. The chain crosses the membrane as a helical span at residues 12-30; the sequence is PKVFFPPLIIVGILCWLTV. The Periplasmic segment spans residues 31 to 42; the sequence is RDLDASNEVINA. The chain crosses the membrane as a helical span at residues 43–68; the sequence is VFSYVTNVWGWAFEWYMVIMFGGWFW. Residues 69–91 are Cytoplasmic-facing; that stretch reads LVFGRYAKKRLGDEKPEFSTASW. Residues 92–112 traverse the membrane as a helical segment; sequence IFMMFASCTSAAVLFWGSIEI. At 113-131 the chain is on the periplasmic side; that stretch reads YYYISSPPFGMEGYSAPAK. A helical transmembrane segment spans residues 132–154; the sequence is EIGLAYSLFHWGPLPWATYSFLS. Over 155 to 185 the chain is Cytoplasmic; sequence VAFAYFFFVRKMEVIRPSSTLTPLVGEKHVN. A helical transmembrane segment spans residues 186–216; it reads GLFGTVVDNFYLVALILAMGTSLGLATPLVT. The Periplasmic segment spans residues 217-230; that stretch reads ECIQYLFGIPHTLQ. A helical membrane pass occupies residues 231 to 249; the sequence is LDAIIISCWILLNAICVAF. At 250–251 the chain is on the cytoplasmic side; that stretch reads GL. Residues 252–277 traverse the membrane as a helical segment; that stretch reads QKGVKIASDVRTYLSFLMLGWVFIVG. Residues 278-311 lie on the Periplasmic side of the membrane; sequence GASFIVNYFTDSVGTLLMYMPRMLFYTDPIGKGG. A helical membrane pass occupies residues 312–335; the sequence is FPQAWTVFYWAWWVIYAIQMSIFL. Residues 336–347 are Cytoplasmic-facing; that stretch reads ARISKGRTVREL. A helical transmembrane segment spans residues 348–369; that stretch reads CLGMVSGLTAGTWLIWTILGGN. Over 370 to 404 the chain is Periplasmic; that stretch reads TLQLIDQNILNIPQLIDQYGVPRAIIETWAALPLS. The chain crosses the membrane as a helical span at residues 405–434; that stretch reads TATMWGFFILCFIATVTLINACSYTLAMST. Topologically, residues 435-445 are cytoplasmic; that stretch reads CRSMKEGAEPP. A helical membrane pass occupies residues 446–464; it reads LLVRIGWSVLVGIIGIILL. Topologically, residues 465-468 are periplasmic; the sequence is ALGG. A helical membrane pass occupies residues 469 to 492; the sequence is LKPIQTAIIAGGCPLFFVNIMVTL. Residues 493-514 are Cytoplasmic-facing; the sequence is SFIKDAKVHWKDCSPYTQKMTH.

The protein belongs to the BCCT transporter (TC 2.A.15) family. CaiT subfamily. Homotrimer.

It is found in the cell inner membrane. It catalyses the reaction 4-(trimethylamino)butanoate(in) + (R)-carnitine(out) = 4-(trimethylamino)butanoate(out) + (R)-carnitine(in). It participates in amine and polyamine metabolism; carnitine metabolism. Catalyzes the exchange of L-carnitine for gamma-butyrobetaine. This Proteus mirabilis (strain HI4320) protein is L-carnitine/gamma-butyrobetaine antiporter.